The following is a 507-amino-acid chain: O-fucosyltransferase 30 (507 aa).

Residues 26–46 (AIFLCSVSILVVFFIVVFFIT) traverse the membrane as a helical; Signal-anchor for type II membrane protein segment. 4 N-linked (GlcNAc...) asparagine glycosylation sites follow: Asn110, Asn146, Asn398, and Asn410.

This sequence belongs to the glycosyltransferase GT106 family.

It is found in the membrane. It participates in glycan metabolism. This Arabidopsis thaliana (Mouse-ear cress) protein is O-fucosyltransferase 30.